Here is a 213-residue protein sequence, read N- to C-terminus: Thymidylate kinase (213 aa).

10 to 17 (GLEGAGKT) is a binding site for ATP.

It belongs to the thymidylate kinase family.

The enzyme catalyses dTMP + ATP = dTDP + ADP. Phosphorylation of dTMP to form dTDP in both de novo and salvage pathways of dTTP synthesis. The sequence is that of Thymidylate kinase from Klebsiella pneumoniae (strain 342).